The sequence spans 234 residues: Probable cyclic nucleotide phosphodiesterase Rmag_0669 (234 aa).

Positions 11, 13, 49, 79, 145, 184, and 186 each coordinate Fe cation. Residues H13, D49, and 79–80 (NH) each bind AMP. H186 is an AMP binding site.

It belongs to the cyclic nucleotide phosphodiesterase class-III family. Requires Fe(2+) as cofactor.

The polypeptide is Probable cyclic nucleotide phosphodiesterase Rmag_0669 (Ruthia magnifica subsp. Calyptogena magnifica).